A 470-amino-acid chain; its full sequence is Aldehyde dehydrogenase family 3 comG (470 aa).

An NAD(+)-binding site is contributed by 196 to 201; that stretch reads GSVKVG. Catalysis depends on residues glutamate 218 and cysteine 252.

Belongs to the aldehyde dehydrogenase family.

The protein localises to the cytoplasm. The enzyme catalyses an aldehyde + NADP(+) + H2O = a carboxylate + NADPH + 2 H(+). It catalyses the reaction an aldehyde + NAD(+) + H2O = a carboxylate + NADH + 2 H(+). This is Aldehyde dehydrogenase family 3 comG (comG) from Dictyostelium discoideum (Social amoeba).